The chain runs to 233 residues: Biosynthetic peptidoglycan transglycosylase (233 aa).

The helical transmembrane segment at 4-24 (LAYLAGCLIVGVVAMQVYFFL) threads the bilayer.

Belongs to the glycosyltransferase 51 family.

The protein resides in the cell inner membrane. It carries out the reaction [GlcNAc-(1-&gt;4)-Mur2Ac(oyl-L-Ala-gamma-D-Glu-L-Lys-D-Ala-D-Ala)](n)-di-trans,octa-cis-undecaprenyl diphosphate + beta-D-GlcNAc-(1-&gt;4)-Mur2Ac(oyl-L-Ala-gamma-D-Glu-L-Lys-D-Ala-D-Ala)-di-trans,octa-cis-undecaprenyl diphosphate = [GlcNAc-(1-&gt;4)-Mur2Ac(oyl-L-Ala-gamma-D-Glu-L-Lys-D-Ala-D-Ala)](n+1)-di-trans,octa-cis-undecaprenyl diphosphate + di-trans,octa-cis-undecaprenyl diphosphate + H(+). It participates in cell wall biogenesis; peptidoglycan biosynthesis. Peptidoglycan polymerase that catalyzes glycan chain elongation from lipid-linked precursors. The chain is Biosynthetic peptidoglycan transglycosylase from Cupriavidus metallidurans (strain ATCC 43123 / DSM 2839 / NBRC 102507 / CH34) (Ralstonia metallidurans).